The following is a 751-amino-acid chain: Centrosomal protein of 68 kDa (751 aa).

Basic and acidic residues-rich tracts occupy residues Met1 to Lys17 and Ala86 to Glu96. The tract at residues Met1–Ala253 is disordered. Composition is skewed to polar residues over residues Leu131 to Cys144 and Ala163 to Lys175. Low complexity predominate over residues Ser176–Ser200. Ser326 bears the Phosphoserine mark. Residues Ser339–Phe348 are compositionally biased toward polar residues. Disordered regions lie at residues Ser339 to Asp474, Ser511 to Pro545, and Arg590 to Glu611. 2 stretches are compositionally biased toward basic and acidic residues: residues Gly399 to Lys416 and Arg433 to Thr450. Residues Ser451–Glu461 are compositionally biased toward polar residues. A phosphoserine mark is found at Ser466 and Ser472. Residues Gly520–Ala537 show a composition bias toward low complexity.

In terms of assembly, interacts with CNTLN; the interaction recruits CEP68 to the centrosome. Interacts with the SCF(FBXW11) complex which contains SKP1, CUL1 and FBXW11; the interaction is probably mediated by FBXW11 and the complex also contains CDK5RAP2 and PCNT. Also interacts with F-box protein BTRC. Interacts with serine/threonine-protein kinase PLK1; the interaction leads to phosphorylation of CEP68 and its subsequent degradation. Interacts with NEK2; the interaction leads to phosphorylation of CEP68. Post-translationally, phosphorylation by PLK1 is required for binding to BTRC in prometaphase. Phosphorylated directly or indirectly by NEK2. NEK2-mediated phosphorylation promotes CEP68 dissociation from the centrosome and its degradation at the onset of mitosis. In terms of processing, ubiquitinated and targeted for proteasomal degradation in early mitosis by the SCF(BTRC) and/or SCF(FBXW11) E3 ubiquitin-protein ligase complexes. Degradation is complete by prometaphase and is required for removal of CDK5RAP2 from the peripheral pericentriolar material and subsequent centriole separation.

The protein localises to the cytoplasm. The protein resides in the cytoskeleton. Its subcellular location is the microtubule organizing center. It is found in the centrosome. In terms of biological role, involved in maintenance of centrosome cohesion, probably as part of a linker structure which prevents centrosome splitting. Required for localization of CDK5RAP2 to the centrosome during interphase. Contributes to CROCC/rootletin filament formation. In Pongo abelii (Sumatran orangutan), this protein is Centrosomal protein of 68 kDa (CEP68).